The primary structure comprises 301 residues: Growth-regulating factor 2 (301 aa).

The QLQ domain occupies 11-46 (LFTATQWQELEHQALIYKYMAAGAPVPPDLLLHLRH). Short sequence motifs (bipartite nuclear localization signal) lie at residues 83-102 (RRVEDPEPGRCRRTDGKKWR) and 120-127 (RGKNRSRK). In terms of domain architecture, WRC spans 87-131 (DPEPGRCRRTDGKKWRCSREAYGESKYCEKHMHRGKNRSRKPVEM).

The protein belongs to the GRF family.

Its subcellular location is the nucleus. Functionally, transcription activator that plays a regulatory role in gibberellin-induced stem elongation. This Oryza sativa subsp. japonica (Rice) protein is Growth-regulating factor 2 (GRF2).